A 387-amino-acid chain; its full sequence is Cystathionine beta-lyase (387 aa).

At lysine 204 the chain carries N6-(pyridoxal phosphate)lysine.

Belongs to the trans-sulfuration enzymes family. Homotetramer. It depends on pyridoxal 5'-phosphate as a cofactor.

It localises to the cytoplasm. The enzyme catalyses L,L-cystathionine + H2O = L-homocysteine + pyruvate + NH4(+). It carries out the reaction an S-substituted L-cysteine + H2O = a thiol + pyruvate + NH4(+). Its pathway is amino-acid biosynthesis; L-methionine biosynthesis via de novo pathway; L-homocysteine from L-cystathionine: step 1/1. Catalyzes the cleavage of cystathionine to homocysteine, pyruvate and ammonia during methionine biosynthesis. This is Cystathionine beta-lyase (metC) from Coxiella burnetii (strain RSA 493 / Nine Mile phase I).